Consider the following 315-residue polypeptide: Tubulin beta-1 chain (315 aa).

Residues S6, G10, T11, G12, N72, and N94 each contribute to the GTP site. A disordered region spans residues 295–315 (DATADEEEYYEDEEEEEAQGM). A compositionally biased stretch (acidic residues) spans 297–315 (TADEEEYYEDEEEEEAQGM).

The protein belongs to the tubulin family. In terms of assembly, dimer of alpha and beta chains. A typical microtubule is a hollow water-filled tube with an outer diameter of 25 nm and an inner diameter of 15 nM. Alpha-beta heterodimers associate head-to-tail to form protofilaments running lengthwise along the microtubule wall with the beta-tubulin subunit facing the microtubule plus end conferring a structural polarity. Microtubules usually have 13 protofilaments but different protofilament numbers can be found in some organisms and specialized cells. Mg(2+) is required as a cofactor.

It localises to the cytoplasm. Its subcellular location is the cytoskeleton. Functionally, tubulin is the major constituent of microtubules, a cylinder consisting of laterally associated linear protofilaments composed of alpha- and beta-tubulin heterodimers. Microtubules grow by the addition of GTP-tubulin dimers to the microtubule end, where a stabilizing cap forms. Below the cap, tubulin dimers are in GDP-bound state, owing to GTPase activity of alpha-tubulin. The polypeptide is Tubulin beta-1 chain (TUBB1) (Daucus carota (Wild carrot)).